Reading from the N-terminus, the 76-residue chain is Small ribosomal subunit protein bS21A (76 aa).

A compositionally biased stretch (basic and acidic residues) spans 35–52; that stretch reads HYEKPSEKRAREKAEAVR. Residues 35–76 form a disordered region; sequence HYEKPSEKRAREKAEAVRRARKLARKRAQREGLVSGRPAAAR. The segment covering 53 to 62 has biased composition (basic residues); sequence RARKLARKRA.

The protein belongs to the bacterial ribosomal protein bS21 family.

The polypeptide is Small ribosomal subunit protein bS21A (Chelativorans sp. (strain BNC1)).